We begin with the raw amino-acid sequence, 689 residues long: Glycine--tRNA ligase beta subunit (689 aa).

The protein belongs to the class-II aminoacyl-tRNA synthetase family. In terms of assembly, tetramer of two alpha and two beta subunits.

It is found in the cytoplasm. The catalysed reaction is tRNA(Gly) + glycine + ATP = glycyl-tRNA(Gly) + AMP + diphosphate. This is Glycine--tRNA ligase beta subunit from Klebsiella pneumoniae (strain 342).